The sequence spans 243 residues: UDP-2,3-diacylglucosamine hydrolase (243 aa).

Mn(2+)-binding residues include Asp8, His10, Asp41, Asn79, and His114. Residue Asn79–Arg80 coordinates substrate. Substrate is bound by residues Asp122, Lys164, Lys167, and His195. Mn(2+) contacts are provided by His195 and His197.

Belongs to the LpxH family. The cofactor is Mn(2+).

It is found in the cell inner membrane. The enzyme catalyses UDP-2-N,3-O-bis[(3R)-3-hydroxytetradecanoyl]-alpha-D-glucosamine + H2O = 2-N,3-O-bis[(3R)-3-hydroxytetradecanoyl]-alpha-D-glucosaminyl 1-phosphate + UMP + 2 H(+). Its pathway is glycolipid biosynthesis; lipid IV(A) biosynthesis; lipid IV(A) from (3R)-3-hydroxytetradecanoyl-[acyl-carrier-protein] and UDP-N-acetyl-alpha-D-glucosamine: step 4/6. Functionally, hydrolyzes the pyrophosphate bond of UDP-2,3-diacylglucosamine to yield 2,3-diacylglucosamine 1-phosphate (lipid X) and UMP by catalyzing the attack of water at the alpha-P atom. Involved in the biosynthesis of lipid A, a phosphorylated glycolipid that anchors the lipopolysaccharide to the outer membrane of the cell. The polypeptide is UDP-2,3-diacylglucosamine hydrolase (Vibrio vulnificus (strain CMCP6)).